The chain runs to 300 residues: 3-hydroxy-3-isohexenylglutaryl-CoA/hydroxy-methylglutaryl-CoA lyase (300 aa).

Residues 7 to 274 (VRLVEVGPRD…HTGVDMHALV (268 aa)) enclose the Pyruvate carboxyltransferase domain. Arg-15 is a substrate binding site. 3 residues coordinate a divalent metal cation: Asp-16, His-207, and His-209. Residue Cys-240 is part of the active site. Asn-249 serves as a coordination point for a divalent metal cation.

It belongs to the HMG-CoA lyase family. Homodimer. Mg(2+) serves as cofactor. It depends on Mn(2+) as a cofactor.

It catalyses the reaction 3-hydroxy-3-(4-methylpent-3-en-1-yl)glutaryl-CoA = 7-methyl-3-oxooct-6-enoyl-CoA + acetate. The enzyme catalyses (3S)-3-hydroxy-3-methylglutaryl-CoA = acetoacetate + acetyl-CoA. It participates in metabolic intermediate metabolism; (S)-3-hydroxy-3-methylglutaryl-CoA degradation; acetoacetate from (S)-3-hydroxy-3-methylglutaryl-CoA: step 1/1. Involved in the L-leucine, isovalerate and acyclic monoterpene catabolism. Catalyzes the cleavage of 3-hydroxy-3-methylglutaryl-CoA (HMG-CoA) to yield acetyl-CoA and acetoacetate. It can also catalyze the cleavage of 3-hydroxy-3-isohexenylglutaryl-CoA (HIHG_CoA) to yield 7-methyl-3-oxooct-6-enoyl-CoA and acetate. This chain is 3-hydroxy-3-isohexenylglutaryl-CoA/hydroxy-methylglutaryl-CoA lyase, found in Pseudomonas aeruginosa (strain ATCC 15692 / DSM 22644 / CIP 104116 / JCM 14847 / LMG 12228 / 1C / PRS 101 / PAO1).